The sequence spans 465 residues: Cysteine--tRNA ligase (465 aa).

C27 contributes to the Zn(2+) binding site. Positions P29–H39 match the 'HIGH' region motif. 3 residues coordinate Zn(2+): C207, H237, and E241. Residues K269 to S273 carry the 'KMSKS' region motif. K272 lines the ATP pocket.

The protein belongs to the class-I aminoacyl-tRNA synthetase family. In terms of assembly, monomer. The cofactor is Zn(2+).

Its subcellular location is the cytoplasm. The catalysed reaction is tRNA(Cys) + L-cysteine + ATP = L-cysteinyl-tRNA(Cys) + AMP + diphosphate. The polypeptide is Cysteine--tRNA ligase (Helicobacter pylori (strain P12)).